Reading from the N-terminus, the 141-residue chain is Large ribosomal subunit protein uL11 (141 aa).

The protein belongs to the universal ribosomal protein uL11 family. In terms of assembly, part of the ribosomal stalk of the 50S ribosomal subunit. Interacts with L10 and the large rRNA to form the base of the stalk. L10 forms an elongated spine to which L12 dimers bind in a sequential fashion forming a multimeric L10(L12)X complex. Post-translationally, one or more lysine residues are methylated.

Functionally, forms part of the ribosomal stalk which helps the ribosome interact with GTP-bound translation factors. This is Large ribosomal subunit protein uL11 from Nostoc punctiforme (strain ATCC 29133 / PCC 73102).